Here is a 398-residue protein sequence, read N- to C-terminus: SEC12-like protein 1 (398 aa).

An N-acetylmethionine modification is found at Met1. At 1-337 the chain is on the cytoplasmic side; it reads MEIEEASRES…TVPKEWKEWQ (337 aa). 5 WD repeats span residues 71–110, 120–159, 162–201, 252–291, and 296–334; these read DSDG…TGIT, QNAG…VILD, KAHK…PLST, LSRK…IYHY, and HLGQ…KEWK. A helical membrane pass occupies residues 338–358; sequence IYALLFCLFMASVIAAYVFFE. At 359–398 the chain is on the lumenal side; that stretch reads NSDSFWKLPMGKDQKRPKISLFGGSSSTPSEDHSRWNLDL.

As to expression, ubiquitous with higher levels in flowers, roots and senescing leaves.

The protein localises to the endoplasmic reticulum membrane. Functionally, involved in Pi uptake by facilitating the trafficking of PHT1-1/PHT1;1 from the endoplasmic reticulum to the plasma membrane. This Arabidopsis thaliana (Mouse-ear cress) protein is SEC12-like protein 1 (PHF1).